Reading from the N-terminus, the 330-residue chain is Aspartate--ammonia ligase (330 aa).

Belongs to the class-II aminoacyl-tRNA synthetase family. AsnA subfamily.

It is found in the cytoplasm. It catalyses the reaction L-aspartate + NH4(+) + ATP = L-asparagine + AMP + diphosphate + H(+). It functions in the pathway amino-acid biosynthesis; L-asparagine biosynthesis; L-asparagine from L-aspartate (ammonia route): step 1/1. This Serratia proteamaculans (strain 568) protein is Aspartate--ammonia ligase.